Here is a 156-residue protein sequence, read N- to C-terminus: Cyanate hydratase (156 aa).

Residues R96, E99, and S122 contribute to the active site.

Belongs to the cyanase family.

It catalyses the reaction cyanate + hydrogencarbonate + 3 H(+) = NH4(+) + 2 CO2. Catalyzes the reaction of cyanate with bicarbonate to produce ammonia and carbon dioxide. In Escherichia coli (strain ATCC 8739 / DSM 1576 / NBRC 3972 / NCIMB 8545 / WDCM 00012 / Crooks), this protein is Cyanate hydratase.